We begin with the raw amino-acid sequence, 224 residues long: tRNA (guanine-N(7)-)-methyltransferase (224 aa).

S-adenosyl-L-methionine is bound by residues Glu-54, Glu-79, Glu-106, and Asp-129. Asp-129 is a catalytic residue. Substrate contacts are provided by Lys-133 and Asp-165.

This sequence belongs to the class I-like SAM-binding methyltransferase superfamily. TrmB family.

It carries out the reaction guanosine(46) in tRNA + S-adenosyl-L-methionine = N(7)-methylguanosine(46) in tRNA + S-adenosyl-L-homocysteine. The protein operates within tRNA modification; N(7)-methylguanine-tRNA biosynthesis. Its function is as follows. Catalyzes the formation of N(7)-methylguanine at position 46 (m7G46) in tRNA. This chain is tRNA (guanine-N(7)-)-methyltransferase, found in Chlamydia trachomatis serovar D (strain ATCC VR-885 / DSM 19411 / UW-3/Cx).